We begin with the raw amino-acid sequence, 425 residues long: Histidinol dehydrogenase (425 aa).

Residues serine 231, glutamine 253, and histidine 256 each contribute to the substrate site. Zn(2+) is bound by residues glutamine 253 and histidine 256. Catalysis depends on proton acceptor residues glutamate 321 and histidine 322. Substrate-binding residues include histidine 322, aspartate 355, glutamate 409, and histidine 414. Aspartate 355 provides a ligand contact to Zn(2+). Histidine 414 is a Zn(2+) binding site.

This sequence belongs to the histidinol dehydrogenase family. Zn(2+) is required as a cofactor.

It carries out the reaction L-histidinol + 2 NAD(+) + H2O = L-histidine + 2 NADH + 3 H(+). It functions in the pathway amino-acid biosynthesis; L-histidine biosynthesis; L-histidine from 5-phospho-alpha-D-ribose 1-diphosphate: step 9/9. In terms of biological role, catalyzes the sequential NAD-dependent oxidations of L-histidinol to L-histidinaldehyde and then to L-histidine. This Carboxydothermus hydrogenoformans (strain ATCC BAA-161 / DSM 6008 / Z-2901) protein is Histidinol dehydrogenase.